The sequence spans 358 residues: tRNA-specific 2-thiouridylase MnmA (358 aa).

ATP contacts are provided by residues 7-14 and Leu33; that span reads AMSGGVDS. Cys101 serves as the catalytic Nucleophile. Cys101 and Cys197 are joined by a disulfide. Gly125 is a binding site for ATP. The tract at residues 147-149 is interaction with tRNA; it reads KDQ. Cys197 (cysteine persulfide intermediate) is an active-site residue.

This sequence belongs to the MnmA/TRMU family.

The protein localises to the cytoplasm. It carries out the reaction S-sulfanyl-L-cysteinyl-[protein] + uridine(34) in tRNA + AH2 + ATP = 2-thiouridine(34) in tRNA + L-cysteinyl-[protein] + A + AMP + diphosphate + H(+). Functionally, catalyzes the 2-thiolation of uridine at the wobble position (U34) of tRNA, leading to the formation of s(2)U34. This is tRNA-specific 2-thiouridylase MnmA from Rickettsia prowazekii (strain Madrid E).